The sequence spans 338 residues: Glyceraldehyde-3-phosphate dehydrogenase (338 aa).

Residues T11–I12 and G109 each bind NAD(+). D-glyceraldehyde 3-phosphate is bound at residue S138 to N140. C139 acts as the Nucleophile in catalysis. R167 contacts NAD(+). D-glyceraldehyde 3-phosphate is bound by residues T169 and H192 to A193. Residue Q299 coordinates NAD(+).

The protein belongs to the glyceraldehyde-3-phosphate dehydrogenase family. As to quaternary structure, homotetramer.

The protein localises to the cytoplasm. The catalysed reaction is D-glyceraldehyde 3-phosphate + phosphate + NADP(+) = (2R)-3-phospho-glyceroyl phosphate + NADPH + H(+). It carries out the reaction D-glyceraldehyde 3-phosphate + phosphate + NAD(+) = (2R)-3-phospho-glyceroyl phosphate + NADH + H(+). It participates in carbohydrate degradation; glycolysis; pyruvate from D-glyceraldehyde 3-phosphate: step 1/5. In Thermoplasma volcanium (strain ATCC 51530 / DSM 4299 / JCM 9571 / NBRC 15438 / GSS1), this protein is Glyceraldehyde-3-phosphate dehydrogenase.